We begin with the raw amino-acid sequence, 211 residues long: Thiamine-phosphate synthase (211 aa).

4-amino-2-methyl-5-(diphosphooxymethyl)pyrimidine-binding positions include 37–41 and Asn-69; that span reads QLRIK. 2 residues coordinate Mg(2+): Asp-70 and Asp-89. 4-amino-2-methyl-5-(diphosphooxymethyl)pyrimidine is bound at residue Ser-108. 2-[(2R,5Z)-2-carboxy-4-methylthiazol-5(2H)-ylidene]ethyl phosphate is bound at residue 134-136; it reads TQT. Residue Lys-137 participates in 4-amino-2-methyl-5-(diphosphooxymethyl)pyrimidine binding. 2-[(2R,5Z)-2-carboxy-4-methylthiazol-5(2H)-ylidene]ethyl phosphate-binding positions include Gly-166 and 186 to 187; that span reads VS.

Belongs to the thiamine-phosphate synthase family. Mg(2+) serves as cofactor.

It carries out the reaction 2-[(2R,5Z)-2-carboxy-4-methylthiazol-5(2H)-ylidene]ethyl phosphate + 4-amino-2-methyl-5-(diphosphooxymethyl)pyrimidine + 2 H(+) = thiamine phosphate + CO2 + diphosphate. The catalysed reaction is 2-(2-carboxy-4-methylthiazol-5-yl)ethyl phosphate + 4-amino-2-methyl-5-(diphosphooxymethyl)pyrimidine + 2 H(+) = thiamine phosphate + CO2 + diphosphate. The enzyme catalyses 4-methyl-5-(2-phosphooxyethyl)-thiazole + 4-amino-2-methyl-5-(diphosphooxymethyl)pyrimidine + H(+) = thiamine phosphate + diphosphate. Its pathway is cofactor biosynthesis; thiamine diphosphate biosynthesis; thiamine phosphate from 4-amino-2-methyl-5-diphosphomethylpyrimidine and 4-methyl-5-(2-phosphoethyl)-thiazole: step 1/1. In terms of biological role, condenses 4-methyl-5-(beta-hydroxyethyl)thiazole monophosphate (THZ-P) and 2-methyl-4-amino-5-hydroxymethyl pyrimidine pyrophosphate (HMP-PP) to form thiamine monophosphate (TMP). This is Thiamine-phosphate synthase from Klebsiella pneumoniae subsp. pneumoniae (strain ATCC 700721 / MGH 78578).